The primary structure comprises 698 residues: Serotransferrin (698 aa).

An N-terminal signal peptide occupies residues 1–19 (MRLAVGALLVCAVLGLCLA). Transferrin-like domains lie at 25–347 (VRWC…NLRE) and 361–683 (VKWC…NLRK). Cystine bridges form between C28–C67 and C38–C58. R42 is subject to Dimethylated arginine. O-linked (GalNAc...) serine glycosylation occurs at S51. Fe(3+) is bound by residues D82 and Y114. Disulfide bonds link C137/C213, C156/C350, C177/C193, C180/C198, C190/C196, C246/C260, C358/C615, C364/C396, C374/C387, C421/C693, C437/C656, C469/C542, C493/C684, C503/C517, C514/C525, C582/C596, and C634/C639. Hydrogencarbonate contacts are provided by T139, R143, A145, and G146. Position 207 (Y207) interacts with Fe(3+). Position 268 (H268) interacts with Fe(3+). Residue S389 is modified to Phosphoserine; by FAM20C. A Fe(3+)-binding site is contributed by D411. N432 carries N-linked (GlcNAc...) (complex) asparagine glycosylation. A Fe(3+)-binding site is contributed by Y445. Positions 471, 475, 477, and 478 each coordinate hydrogencarbonate. N491 carries an N-linked (GlcNAc...) asparagine; atypical; partial glycan. Y536 is a binding site for Fe(3+). H604 contacts Fe(3+). A glycan (N-linked (GlcNAc...) (complex) asparagine) is linked at N630. S685 bears the Phosphoserine; by FAM20C mark.

Belongs to the transferrin family. Monomer. Part of a complex composed of SLC40A1/ferroportin, TF/transferrin and HEPH/hephaestin that transfers iron from cells to transferrin. As to quaternary structure, (Microbial infection) Binds to Neisseria transferrin-binding protein A (tbpA or tbp1). Forms a large complex with TbpA and TbpB. In terms of assembly, (Microbial infection) Binds to Neisseria transferrin-binding protein B (tbpb or tbp2). As to expression, expressed by the liver and secreted in plasma.

It localises to the secreted. In terms of biological role, transferrins are iron binding transport proteins which can bind two Fe(3+) ions in association with the binding of an anion, usually bicarbonate. It is responsible for the transport of iron from sites of absorption and heme degradation to those of storage and utilization. Serum transferrin may also have a further role in stimulating cell proliferation. (Microbial infection) Serves as an iron source for Neisseria species, which capture the protein and extract its iron for their own use. Functionally, (Microbial infection) Serves as an iron source for parasite T.brucei (strain 427), which capture TF via its own transferrin receptor ESAG6:ESAG7 and extract its iron for its own use. This Homo sapiens (Human) protein is Serotransferrin.